Here is a 45-residue protein sequence, read N- to C-terminus: Photosystem II reaction center protein K (45 aa).

Positions 1 to 8 (MEAALLLA) are excised as a propeptide. The helical transmembrane segment at 24 to 44 (LPLIPLFFLLLAFVWQAAVGF) threads the bilayer.

Belongs to the PsbK family. PSII is composed of 1 copy each of membrane proteins PsbA, PsbB, PsbC, PsbD, PsbE, PsbF, PsbH, PsbI, PsbJ, PsbK, PsbL, PsbM, PsbT, PsbX, PsbY, PsbZ, Psb30/Ycf12, peripheral proteins PsbO, CyanoQ (PsbQ), PsbU, PsbV and a large number of cofactors. It forms dimeric complexes.

Its subcellular location is the cellular thylakoid membrane. Functionally, one of the components of the core complex of photosystem II (PSII). PSII is a light-driven water:plastoquinone oxidoreductase that uses light energy to abstract electrons from H(2)O, generating O(2) and a proton gradient subsequently used for ATP formation. It consists of a core antenna complex that captures photons, and an electron transfer chain that converts photonic excitation into a charge separation. The polypeptide is Photosystem II reaction center protein K (Picosynechococcus sp. (strain ATCC 27264 / PCC 7002 / PR-6) (Agmenellum quadruplicatum)).